We begin with the raw amino-acid sequence, 27 residues long: Weak neurotoxin E3 (27 aa).

In terms of tissue distribution, expressed by the venom gland.

Its subcellular location is the secreted. Binds to muscle nicotinic acetylcholine receptor (nAChR) and inhibit acetylcholine from binding to the receptor, thereby impairing neuromuscular transmission. The polypeptide is Weak neurotoxin E3 (Micrurus pyrrhocryptus (Coral snake)).